We begin with the raw amino-acid sequence, 266 residues long: Undecaprenyl-diphosphatase (266 aa).

7 helical membrane-spanning segments follow: residues 41 to 61 (YAYSLGLFLEAASVLAALIYF), 82 to 102 (LVYILVTTLVTAVVGLPLYYV), 106 to 126 (WLVVGHSAGFLMIVLGLAVVL), 159 to 179 (AVSVLPGLSRSGATVTALLLL), 191 to 211 (FVLVPVAGLGATALAYLSEGG), 213 to 233 (VATAEALLAMAIGIVISIITI), and 246 to 266 (VLVNVVIGLLAIAGGLLRIIF).

Belongs to the UppP family.

It is found in the cell membrane. It carries out the reaction di-trans,octa-cis-undecaprenyl diphosphate + H2O = di-trans,octa-cis-undecaprenyl phosphate + phosphate + H(+). Catalyzes the dephosphorylation of undecaprenyl diphosphate (UPP). The polypeptide is Undecaprenyl-diphosphatase (Pyrobaculum aerophilum (strain ATCC 51768 / DSM 7523 / JCM 9630 / CIP 104966 / NBRC 100827 / IM2)).